The following is a 330-amino-acid chain: Protein LEG1 homolog (330 aa).

The first 20 residues, M1–A20, serve as a signal peptide directing secretion. N24 and N69 each carry an N-linked (GlcNAc...) asparagine glycan.

Belongs to the LEG1 family. As to expression, detected in saliva and in hypomineralized dental enamel (at protein level).

The protein resides in the secreted. May be involved in early liver development. In Homo sapiens (Human), this protein is Protein LEG1 homolog.